A 127-amino-acid chain; its full sequence is Large ribosomal subunit protein bL12 (127 aa).

Residues 98-127 form a disordered region; sequence PKPIKEGAPKAEAESLKSKLEEAGAEVELK.

Belongs to the bacterial ribosomal protein bL12 family. Homodimer. Part of the ribosomal stalk of the 50S ribosomal subunit. Forms a multimeric L10(L12)X complex, where L10 forms an elongated spine to which 2 to 4 L12 dimers bind in a sequential fashion. Binds GTP-bound translation factors.

Forms part of the ribosomal stalk which helps the ribosome interact with GTP-bound translation factors. Is thus essential for accurate translation. This chain is Large ribosomal subunit protein bL12, found in Amoebophilus asiaticus (strain 5a2).